The sequence spans 152 residues: UPF0266 membrane protein YobD (152 aa).

3 helical membrane passes run 6-26 (LLLI…QFIM), 45-65 (VDSV…VTSH), and 67-87 (AQMT…IFWI).

It belongs to the UPF0266 family.

It is found in the cell inner membrane. This Salmonella paratyphi C (strain RKS4594) protein is UPF0266 membrane protein YobD.